Here is a 507-residue protein sequence, read N- to C-terminus: Histone-lysine N-methyltransferase set-18 (507 aa).

Cys-49, Cys-52, Cys-65, Cys-68, Cys-74, Cys-78, His-86, and Cys-90 together coordinate Zn(2+). Residues 49-90 (CANCLRGPAPGEKLLRCGGCNFSMYCSKECQATAWLVHKPEC) form an MYND-type zinc finger.

Belongs to the class V-like SAM-binding methyltransferase superfamily. Histone-lysine methyltransferase family. As to expression, expressed in pharyngeal and body wall muscles.

It catalyses the reaction L-lysyl(36)-[histone H3] + 2 S-adenosyl-L-methionine = N(6),N(6)-dimethyl-L-lysyl(36)-[histone H3] + 2 S-adenosyl-L-homocysteine + 2 H(+). Functionally, histone methyltransferase. Specifically methylates 'Lys-36' of histone H3, inducing di-methylation. Plays a role in modulating lifespan and oxidative stress resistance, in a manner dependent upon daf-16/Forkhead box protein O and the Insulin/IGF-1-like signaling (IIS) mediated pathway. Represses transcription of daf-16 isoform a, perhaps by methylating histone H3 at the daf-16 promoter, which in turn leads to recruitment of histone deacetylases and thus modulation of expression. The protein is Histone-lysine N-methyltransferase set-18 of Caenorhabditis elegans.